A 245-amino-acid polypeptide reads, in one-letter code: Terpene cyclase prhH (245 aa).

7 consecutive transmembrane segments (helical) span residues 17-37 (ILAI…VNYI), 51-71 (IGIL…WMFP), 76-96 (HWQG…LVTL), 113-133 (IVFI…ALAA), 138-158 (ALGF…CGIA), 170-190 (SYLI…KLCI), and 205-225 (PMCW…PFLY).

This sequence belongs to the paxB family.

Its subcellular location is the membrane. It participates in secondary metabolite biosynthesis; terpenoid biosynthesis. Its function is as follows. Terpene cyclase; part of the gene cluster that mediates the biosynthesis of paraherquonin, a meroterpenoid with a unique, highly congested hexacyclic molecular architecture. The first step of the pathway is the synthesis of 3,5-dimethylorsellinic acid (DMOA) by the polyketide synthase prhL. Synthesis of DMOA is followed by farnesylation by the prenyltransferase prhE, methylesterification by the methyl-transferase prhM, epoxidation of the prenyl chain by the flavin-dependent monooxygenase prhF, and cyclization of the farnesyl moiety by the terpene cyclase prhH, to yield the tetracyclic intermediate, protoaustinoid A. The short chain dehydrogenase prhI then oxidizes the C-3 alcohol group of the terpene cyclase product to transform protoaustinoid A into protoaustinoid B. The FAD-binding monooxygenase prhJ catalyzes the oxidation of protoaustinoid B into preaustinoid A which is further oxidized into preaustinoid A1 by FAD-binding monooxygenase phrK. Finally, prhA leads to berkeleydione via the berkeleyone B intermediate. PrhA is a multifunctional dioxygenase that first desaturates at C5-C6 to form berkeleyone B, followed by rearrangement of the A/B-ring to form the cycloheptadiene moiety in berkeleydione. Berkeleydione serves as the key intermediate for the biosynthesis of paraherquonin as well as many other meroterpenoids. The cytochrome P450 monooxygenases prhB, prhD, and prhN, as well as the isomerase prhC, are probably involved in the late stage of paraherquonin biosynthesis, after the production of berkeleydione. Especially prhC might be a multifunctional enzyme that catalyzes the D-ring expansion via intramolecular methoxy rearrangement, as well as the hydrolysis of the expanded D-ring. The chain is Terpene cyclase prhH from Penicillium brasilianum.